Reading from the N-terminus, the 175-residue chain is Peptide methionine sulfoxide reductase MsrA (175 aa).

The active site involves Cys10.

It belongs to the MsrA Met sulfoxide reductase family.

It carries out the reaction L-methionyl-[protein] + [thioredoxin]-disulfide + H2O = L-methionyl-(S)-S-oxide-[protein] + [thioredoxin]-dithiol. It catalyses the reaction [thioredoxin]-disulfide + L-methionine + H2O = L-methionine (S)-S-oxide + [thioredoxin]-dithiol. In terms of biological role, has an important function as a repair enzyme for proteins that have been inactivated by oxidation. Catalyzes the reversible oxidation-reduction of methionine sulfoxide in proteins to methionine. The chain is Peptide methionine sulfoxide reductase MsrA from Psychrobacter sp. (strain PRwf-1).